A 253-amino-acid polypeptide reads, in one-letter code: tRNA (guanine-N(7)-)-methyltransferase (253 aa).

Residues 1-12 show a composition bias toward pro residues; sequence MSQTPMPQPDQA. Residues 1–39 form a disordered region; it reads MSQTPMPQPDQAPPVDVGQPVDEAEAKRRRFKTHGRKKG. Positions 27–39 are enriched in basic residues; that stretch reads KRRRFKTHGRKKG. The S-adenosyl-L-methionine site is built by E84, D109, N136, and D159. D159 is a catalytic residue. Residues K163, D195, and 232–235 contribute to the substrate site; that span reads TNFE.

Belongs to the class I-like SAM-binding methyltransferase superfamily. TrmB family.

The catalysed reaction is guanosine(46) in tRNA + S-adenosyl-L-methionine = N(7)-methylguanosine(46) in tRNA + S-adenosyl-L-homocysteine. It participates in tRNA modification; N(7)-methylguanine-tRNA biosynthesis. In terms of biological role, catalyzes the formation of N(7)-methylguanine at position 46 (m7G46) in tRNA. In Magnetococcus marinus (strain ATCC BAA-1437 / JCM 17883 / MC-1), this protein is tRNA (guanine-N(7)-)-methyltransferase.